The sequence spans 345 residues: uncharacterized protein (345 aa).

The protein belongs to the transketolase family. Thiamine diphosphate is required as a cofactor.

This is an uncharacterized protein from Sinorhizobium fredii (strain NBRC 101917 / NGR234).